The primary structure comprises 372 residues: MIFPISEIPDKVTHSILEGVSALQNMSHTAFWSTVLGFLVVARIAVILATPKRRVLDIKGKKVVISGGSQGAGAALAELCYTKGANVVIVSRTVSKLEAQVQKIVTKHEPVFEGQTIRYISADLTKEEEAIRVFSEETMPAPPDVIFSCAGAAETGFILDFKASQLARAFSTNYLSALFFVHAGTTRMAKEPISPKNPRYVAIFSSVLAFYPLLGYGQYCASKAAVRSLIDSLRVEALPFNIRVVGVFPGNFQSEGFEEENKSKPEITRQIEGPSQAISAEECAKIVFAQMEKGGQMITTDLIGWILQSIALSSSPRSFSLLQIPLAIFMCIFSPVWNAFVNRDVRKYFHANTEYVTRHQRGGVGSENPTPQ.

Val64 provides a ligand contact to NADP(+). Residues Gly67, Ser69, Gly71, Arg92, Lys96, Asp123, and Leu124 each coordinate NADPH. Positions 67-71 (GGSQG) match the GXSXG motif. Asp123 is a binding site for NADP(+). Residue Ser205 is the Proton donor of the active site. NADP(+)-binding residues include Tyr219, Lys223, and Ser254. Tyr219 acts as the Proton acceptor in catalysis. Lys223 (lowers pKa of active site Tyr) is an active-site residue. Residues 321 to 341 (LLQIPLAIFMCIFSPVWNAFV) traverse the membrane as a helical segment.

The protein belongs to the short-chain dehydrogenases/reductases (SDR) family.

Its subcellular location is the endoplasmic reticulum membrane. It carries out the reaction sphinganine + NADP(+) = 3-oxosphinganine + NADPH + H(+). It participates in lipid metabolism; sphingolipid metabolism. Catalyzes the reduction of 3'-oxosphinganine (3-ketodihydrosphingosine/KDS) to sphinganine (dihydrosphingosine/DHS), the second step of de novo sphingolipid biosynthesis. The polypeptide is 3-ketodihydrosphingosine reductase TSC10 (TSC10) (Yarrowia lipolytica (strain CLIB 122 / E 150) (Yeast)).